We begin with the raw amino-acid sequence, 33 residues long: Cytochrome b6-f complex subunit 8 (33 aa).

Residues 2–22 traverse the membrane as a helical segment; it reads LFTFAWASLAAIFTFSIAMVV.

This sequence belongs to the PetN family. As to quaternary structure, the 4 large subunits of the cytochrome b6-f complex are cytochrome b6, subunit IV (17 kDa polypeptide, PetD), cytochrome f and the Rieske protein, while the 4 small subunits are PetG, PetL, PetM and PetN. The complex functions as a dimer.

It localises to the cellular thylakoid membrane. Functionally, component of the cytochrome b6-f complex, which mediates electron transfer between photosystem II (PSII) and photosystem I (PSI), cyclic electron flow around PSI, and state transitions. The protein is Cytochrome b6-f complex subunit 8 of Prochlorococcus marinus (strain SARG / CCMP1375 / SS120).